A 325-amino-acid polypeptide reads, in one-letter code: tRNA-dihydrouridine(16) synthase (325 aa).

FMN is bound by residues 12-14 (PMQ) and Gln73. Cys103 (proton donor) is an active-site residue. Residues Lys144, 205-207 (NGE), and 229-230 (GR) each bind FMN.

Belongs to the Dus family. DusC subfamily. FMN serves as cofactor.

It catalyses the reaction 5,6-dihydrouridine(16) in tRNA + NADP(+) = uridine(16) in tRNA + NADPH + H(+). The catalysed reaction is 5,6-dihydrouridine(16) in tRNA + NAD(+) = uridine(16) in tRNA + NADH + H(+). Functionally, catalyzes the synthesis of 5,6-dihydrouridine (D), a modified base found in the D-loop of most tRNAs, via the reduction of the C5-C6 double bond in target uridines. Specifically modifies U16 in tRNAs. The protein is tRNA-dihydrouridine(16) synthase of Haemophilus ducreyi (strain 35000HP / ATCC 700724).